A 97-amino-acid chain; its full sequence is UPF0235 protein Aasi_0294 (97 aa).

Belongs to the UPF0235 family.

This is UPF0235 protein Aasi_0294 from Amoebophilus asiaticus (strain 5a2).